The following is a 312-amino-acid chain: Malate dehydrogenase (312 aa).

Residues Gly12–Gly17 and Asp36 each bind NAD(+). 2 residues coordinate substrate: Arg87 and Arg93. NAD(+)-binding positions include Asn100 and Leu123–Asn125. Asn125 provides a ligand contact to substrate. Residue Ser149 is modified to Phosphoserine. Substrate is bound at residue Arg156. His180 acts as the Proton acceptor in catalysis.

The protein belongs to the LDH/MDH superfamily. MDH type 3 family.

The catalysed reaction is (S)-malate + NAD(+) = oxaloacetate + NADH + H(+). Catalyzes the reversible oxidation of malate to oxaloacetate. The chain is Malate dehydrogenase from Bacillus anthracis (strain A0248).